A 360-amino-acid chain; its full sequence is RNA-binding protein 1 (360 aa).

In terms of domain architecture, RRM 1 spans 6 to 82 (YKLFVGGIAK…KPVDVRKAIR (77 aa)). Residues 93 to 113 (MQFLERKVQQMNGGLREMSSN) are a coiled coil. The RRM 2 domain maps to 120–197 (KKIFVGGLSS…KRVEVKRAIP (78 aa)).

As to expression, highly expressed in inflorescences and roots. Detected in leaves and seedlings, but not in stems. Expressed in vegetative shoot apex and root meristem, but not in root cap. Detected in flower buds, junction of pedicels, joints of immature siliques and pistil.

Functionally, RNA binding protein. Can also bind in vitro to single-stranded DNA. In Arabidopsis thaliana (Mouse-ear cress), this protein is RNA-binding protein 1 (RBP1).